Here is a 216-residue protein sequence, read N- to C-terminus: Somatotropin (216 aa).

Positions 1–26 (MAADSQTSRLLTFTLLCLLWPQEAGA) are cleaved as a signal peptide. Position 45 (H45) interacts with Zn(2+). Cysteines 78 and 189 form a disulfide. Residue S131 is modified to Phosphoserine. Residue E198 coordinates Zn(2+). The cysteines at positions 206 and 214 are disulfide-linked.

Belongs to the somatotropin/prolactin family.

It localises to the secreted. Plays an important role in growth control. Its major role in stimulating body growth is to stimulate the liver and other tissues to secrete IGF1. It stimulates both the differentiation and proliferation of myoblasts. It also stimulates amino acid uptake and protein synthesis in muscle and other tissues. This is Somatotropin (GH1) from Mesocricetus auratus (Golden hamster).